Consider the following 921-residue polypeptide: Protein translocase subunit SecA (921 aa).

ATP is bound by residues glutamine 87, 105–109 (GEGKT), and aspartate 516. 4 residues coordinate Zn(2+): cysteine 905, cysteine 907, cysteine 916, and histidine 917.

Belongs to the SecA family. In terms of assembly, monomer and homodimer. Part of the essential Sec protein translocation apparatus which comprises SecA, SecYEG and auxiliary proteins SecDF-YajC and YidC. The cofactor is Zn(2+).

It localises to the cell inner membrane. The protein localises to the cytoplasm. The catalysed reaction is ATP + H2O + cellular proteinSide 1 = ADP + phosphate + cellular proteinSide 2.. In terms of biological role, part of the Sec protein translocase complex. Interacts with the SecYEG preprotein conducting channel. Has a central role in coupling the hydrolysis of ATP to the transfer of proteins into and across the cell membrane, serving both as a receptor for the preprotein-SecB complex and as an ATP-driven molecular motor driving the stepwise translocation of polypeptide chains across the membrane. This chain is Protein translocase subunit SecA, found in Albidiferax ferrireducens (strain ATCC BAA-621 / DSM 15236 / T118) (Rhodoferax ferrireducens).